We begin with the raw amino-acid sequence, 103 residues long: Small ribosomal subunit protein bS6c (103 aa).

Belongs to the bacterial ribosomal protein bS6 family.

Its subcellular location is the plastid. The protein localises to the chloroplast. Functionally, binds together with bS18 to 16S ribosomal RNA. In Cyanidium caldarium (Red alga), this protein is Small ribosomal subunit protein bS6c (rps6).